A 202-amino-acid polypeptide reads, in one-letter code: MQRVTSYLPAGTPSSHPTAQVKLPHDLRHLRRKLLHLENGEMVMLDLKDPVLFANGDLLVREDGELIEILAADEKLFEIRGRDRTHLVELAWHLGNRHLAAQIEEDRIVILRDHVIRNMLQGLGATVLEINEPFQPARGAYHSHGGHSHDHGHAAHDHGHAAHDHGHNHDHDHGHAHGHDHQHDHNCDHDHDHGHHHGHKHD.

The disordered stretch occupies residues 138–202 (RGAYHSHGGH…HGHHHGHKHD (65 aa)). Residues 147–193 (HSHDHGHAAHDHGHAAHDHGHNHDHDHGHAHGHDHQHDHNCDHDHDH) are compositionally biased toward basic and acidic residues.

It belongs to the UreE family.

Its subcellular location is the cytoplasm. Involved in urease metallocenter assembly. Binds nickel. Probably functions as a nickel donor during metallocenter assembly. In Rhizobium etli (strain CIAT 652), this protein is Urease accessory protein UreE.